Here is a 608-residue protein sequence, read N- to C-terminus: Threonine--tRNA ligase (608 aa).

The interval 1 to 144 is editing domain; that stretch reads MRILLIHSDY…SRTITAEEEE (144 aa). The interval 195–489 is catalytic; it reads PHVKLMREKE…ELDEKAPMLP (295 aa). Zn(2+) is bound by residues C286, H338, and H459.

This sequence belongs to the class-II aminoacyl-tRNA synthetase family. In terms of assembly, homodimer. Zn(2+) is required as a cofactor.

It localises to the cytoplasm. The enzyme catalyses tRNA(Thr) + L-threonine + ATP = L-threonyl-tRNA(Thr) + AMP + diphosphate + H(+). Its function is as follows. Catalyzes the attachment of threonine to tRNA(Thr) in a two-step reaction: L-threonine is first activated by ATP to form Thr-AMP and then transferred to the acceptor end of tRNA(Thr). Also edits incorrectly charged L-seryl-tRNA(Thr). The sequence is that of Threonine--tRNA ligase from Methanobrevibacter smithii (strain ATCC 35061 / DSM 861 / OCM 144 / PS).